The sequence spans 942 residues: MTGSNSHITILTLKVLPHFESLGKQEKIPNKMSAFRNHCPHLDSVGEITKEDLIQKSLGTCQDCKVQGPNLWACLENRCSYVGCGESQVDHSTIHSQETKHYLTVNLTTLRVWCYACSKEVFLDRKLGTQPSLPHVRQPHQIQENSVQDFKIPSNTTLKTPLVAVFDDLDIEADEEDELRARGLTGLKNIGNTCYMNAALQALSNCPPLTQFFLDCGGLARTDKKPAICKSYLKLMTELWHKSRPGSVVPTTLFQGIKTVNPTFRGYSQQDAQEFLRCLMDLLHEELKEQVMEVEEDPQTITTEETMEEDKSQSDVDFQSCESCSNSDRAENENGSRCFSEDNNETTMLIQDDENNSEMSKDWQKEKMCNKINKVNSEGEFDKDRDSISETVDLNNQETVKVQIHSRASEYITDVHSNDLSTPQILPSNEGVNPRLSASPPKSGNLWPGLAPPHKKAQSASPKRKKQHKKYRSVISDIFDGTIISSVQCLTCDRVSVTLETFQDLSLPIPGKEDLAKLHSSSHPTSIVKAGSCGEAYAPQGWIAFFMEYVKRFVVSCVPSWFWGPVVTLQDCLAAFFARDELKGDNMYSCEKCKKLRNGVKFCKVQNFPEILCIHLKRFRHELMFSTKISTHVSFPLEGLDLQPFLAKDSPAQIVTYDLLSVICHHGTASSGHYIAYCRNNLNNLWYEFDDQSVTEVSESTVQNAEAYVLFYRKSSEEAQKERRRISNLLNIMEPSLLQFYISRQWLNKFKTFAEPGPISNNDFLCIHGGVPPRKAGYIEDLVLMLPQNIWDNLYSRYGGGPAVNHLYICHTCQIEAEKIEKRRKTELEIFIRLNRAFQKEDSPATFYCISMQWFREWESFVKGKDGDPPGPIDNTKIAVTKCGNVMLRQGADSGQISEETWNFLQSIYGGGPEVILRPPVVHVDPDILQAEEKIEVETRSL.

The UBP-type zinc finger occupies 37-140 (NHCPHLDSVG…PSLPHVRQPH (104 aa)). Positions 39, 41, 61, 64, 74, 79, 84, 91, 95, 101, 114, and 117 each coordinate Zn(2+). Residues 185 to 715 (TGLKNIGNTC…EAYVLFYRKS (531 aa)) form the USP domain. Cys-194 (nucleophile) is an active-site residue. Positions 294–357 (VEEDPQTITT…MLIQDDENNS (64 aa)) are disordered. Residues 315–327 (DVDFQSCESCSNS) show a composition bias toward polar residues. Ser-377 is subject to Phosphoserine. Positions 419 to 431 (DLSTPQILPSNEG) are enriched in polar residues. The interval 419–469 (DLSTPQILPSNEGVNPRLSASPPKSGNLWPGLAPPHKKAQSASPKRKKQHK) is disordered. The residue at position 439 (Ser-439) is a Phosphoserine. The segment covering 453-469 (PHKKAQSASPKRKKQHK) has biased composition (basic residues). His-673 (proton acceptor) is an active-site residue. 2 DUSP domains span residues 717-810 (EEAQ…LYIC) and 818-921 (EKIE…RPPV).

This sequence belongs to the peptidase C19 family. USP20/USP33 subfamily. Interacts with VHL, leading to its ubiquitination and subsequent degradation. Interacts with ARRB1 and ARRB2. Interacts with ADRB2. Interacts with DIO2. Interacts with ROBO1. Interacts with SELENBP1; in a selenium-dependent manner. Interacts with CCP110. Post-translationally, ubiquitinated via a VHL-dependent pathway for proteasomal degradation. Widely expressed.

It is found in the cytoplasm. The protein resides in the perinuclear region. Its subcellular location is the cytoskeleton. It localises to the microtubule organizing center. The protein localises to the centrosome. It is found in the golgi apparatus. It carries out the reaction Thiol-dependent hydrolysis of ester, thioester, amide, peptide and isopeptide bonds formed by the C-terminal Gly of ubiquitin (a 76-residue protein attached to proteins as an intracellular targeting signal).. Functionally, deubiquitinating enzyme involved in various processes such as centrosome duplication, cellular migration and beta-2 adrenergic receptor/ADRB2 recycling. Involved in regulation of centrosome duplication by mediating deubiquitination of CCP110 in S and G2/M phase, leading to stabilize CCP110 during the period which centrioles duplicate and elongate. Involved in cell migration via its interaction with intracellular domain of ROBO1, leading to regulate the Slit signaling. Plays a role in commissural axon guidance cross the ventral midline of the neural tube in a Slit-dependent manner, possibly by mediating the deubiquitination of ROBO1. Acts as a regulator of G-protein coupled receptor (GPCR) signaling by mediating the deubiquitination of beta-arrestins (ARRB1 and ARRB2) and beta-2 adrenergic receptor (ADRB2). Plays a central role in ADRB2 recycling and resensitization after prolonged agonist stimulation by constitutively binding ADRB2, mediating deubiquitination of ADRB2 and inhibiting lysosomal trafficking of ADRB2. Upon dissociation, it is probably transferred to the translocated beta-arrestins, leading to beta-arrestins deubiquitination and disengagement from ADRB2. This suggests the existence of a dynamic exchange between the ADRB2 and beta-arrestins. Deubiquitinates DIO2, thereby regulating thyroid hormone regulation. Mediates deubiquitination of both 'Lys-48'- and 'Lys-63'-linked polyubiquitin chains. The polypeptide is Ubiquitin carboxyl-terminal hydrolase 33 (USP33) (Homo sapiens (Human)).